Reading from the N-terminus, the 1816-residue chain is Kinesin-like protein KIF1B (1816 aa).

Serine 2 is subject to N-acetylserine. A Kinesin motor domain is found at 5 to 354 (SVKVAVRVRP…LRYADRAKQI (350 aa)). 97 to 104 (GQTGAGKS) lines the ATP pocket. Positions 270 to 350 (NINKSLTTLG…TLSTLRYADR (81 aa)) are interaction with KIFBP. 2 coiled-coil regions span residues 365–386 (NAKLVRELKEEVTRLKDLLRAQ) and 470–502 (GEEAIERLKESEKIIAELNETWEEKLRKTEAIR). Positions 556 to 612 (TRVGQADAERRQDIVLSGAHIKEEHCLFRSERSNTGEVIVTLEPCERSETYVNGKRV) constitute an FHA domain. Residues threonine 647 and threonine 652 each carry the phosphothreonine modification. Coiled-coil stretches lie at residues 668–737 (EKQG…EEEV) and 841–869 (SLDKLKQRLDLMREMYDRAGEVASSAQDD). Phosphoserine occurs at positions 1054, 1057, 1416, 1454, and 1487. The tract at residues 1522–1571 (VPKSLSDSLSPSLSSGTLSTSTSISSQISTTTFESAITPSESSGYDSADV) is disordered. Low complexity predominate over residues 1525–1553 (SLSDSLSPSLSSGTLSTSTSISSQISTTT). Over residues 1554–1566 (FESAITPSESSGY) the composition is skewed to polar residues. Phosphoserine is present on residues serine 1573, serine 1603, serine 1610, and serine 1613. Over residues 1620–1637 (SVSSFSSSTLTPSSTCPS) the composition is skewed to low complexity. Positions 1620–1659 (SVSSFSSSTLTPSSTCPSLVDSRSSSMDQKTPEANSRASS) are disordered. Positions 1640–1659 (DSRSSSMDQKTPEANSRASS) are enriched in polar residues. One can recognise a PH domain in the interval 1702–1799 (VSKKGYLHFK…WLYAFNPLLA (98 aa)).

The protein belongs to the TRAFAC class myosin-kinesin ATPase superfamily. Kinesin family. Unc-104 subfamily. In terms of assembly, monomer. Interacts with KIFBP; positively regulates KIF1B microtubule motor activity. Interacts (via C-terminus end of the kinesin-motor domain) with CHP1; the interaction occurs in a calcium-dependent manner. As to quaternary structure, interacts with MADD (via death domain); links this isoform to Rab3-carrying vesicles in anterograde synaptic vesicle transport. Expressed in the brain (at protein level).

It localises to the cytoplasm. The protein resides in the cytoskeleton. It is found in the cytoplasmic vesicle. Its subcellular location is the secretory vesicle. The protein localises to the synaptic vesicle membrane. It localises to the mitochondrion. The enzyme catalyses ATP + H2O + a kinesin associated with a microtubule at position (n) = ADP + phosphate a kinesin associated with a microtubule at position (n+1, toward the plus end).. Has a plus-end-directed microtubule motor activity and functions as a motor for transport of vesicles and organelles along microtubules. Functionally, has a plus-end-directed microtubule motor activity and functions as a motor for anterograde synaptic vesicle transport along axonal microtubules from the cell body to the presynapse in neuronal cells. Functions as a downstream effector in a developmental apoptotic pathway that is activated when nerve growth factor (NGF) becomes limiting for neuronal progenitor cells. Its function is as follows. Has a plus-end-directed microtubule motor activity and functions as a motor for anterograde transport of mitochondria. The protein is Kinesin-like protein KIF1B of Mus musculus (Mouse).